We begin with the raw amino-acid sequence, 247 residues long: Granulin (247 aa).

Belongs to the polyhedrin family.

Functionally, component of the virus occlusion bodies, which are large proteinaceous structures, that protect the virus from the outside environment for extended periods until they are ingested by insect larvae. This is Granulin from Pieris brassicae granulosis virus (PbGV).